Consider the following 286-residue polypeptide: Expansin-like protein 1 (286 aa).

Positions 1–21 are cleaved as a signal peptide; the sequence is MKTFVLFVILLCLTFLSISKS. Residues 22 to 265 are Extracellular-facing; sequence ETCPFSQSLV…TGASIGTPSD (244 aa). The region spanning 44–145 is the Expansin-like EG45 domain; it reads AGNCGYENLM…YKVPCGVNGN (102 aa). 2 disulfide bridges follow: cysteine 47–cysteine 77 and cysteine 80–cysteine 140. N-linked (GlcNAc...) asparagine glycosylation is found at asparagine 82 and asparagine 89. The chain crosses the membrane as a helical span at residues 266 to 286; the sequence is ASSLTLYALFSLTILFLVMLN.

Belongs to the expansin family. Expansin A subfamily.

Its subcellular location is the membrane. Functionally, may serve to lubricate the movement of the cellulose microfibrils during cell growth and wall extension and/or they may serve to maintain the fluid state of the slug cell wall. The polypeptide is Expansin-like protein 1 (expl1) (Dictyostelium discoideum (Social amoeba)).